The chain runs to 1071 residues: Exportin-1 (1071 aa).

Residues 46-112 enclose the Importin N-terminal domain; that stretch reads AQEVLTHLKE…KKYVVGLIIK (67 aa). HEAT repeat units follow at residues 217 to 240, 241 to 277, 354 to 472, 515 to 553, 560 to 597, and 602 to 639; these read QNAP…PLGY, IFET…VSVS, MLLV…YVDT, RFLV…QYPR, KFLK…KCRR, and VQVG…AVGY. The segment at 327–450 is necessary for interaction with Ran and nuclear export complex formation; it reads CTFLKEHGQL…VREFMKDTDS (124 aa). The residue at position 391 (serine 391) is a Phosphoserine. Residues 411 to 481 are necessary for interaction with RANBP3; it reads TVLSKVRLLM…TEIIMTKKLQ (71 aa). Lysine 446 carries the post-translational modification N6-acetyllysine. Threonine 448 carries the phosphothreonine modification. Serine 450 bears the Phosphoserine mark. At tyrosine 454 the chain carries Phosphotyrosine. The residue at position 693 (lysine 693) is an N6-acetyllysine. HEAT repeat units lie at residues 775–813, 885–916, 917–954, and 1002–1039; these read NFVP…KLGG, TMRN…SFYQ, TYFC…NLVE, and FSLN…EERE. Serine 1031 bears the Phosphoserine mark.

It belongs to the exportin family. Found in a U snRNA export complex with PHAX/RNUXA, NCBP1/CBP80, NCBP2/CBP20, RAN, XPO1 and m7G-capped RNA. Component of a nuclear export receptor complex composed of KPNB1, RAN, SNUPN and XPO1. Found in a trimeric export complex with SNUPN, RAN and XPO1. Found in a nuclear export complex with RANBP3 and RAN. Found in a 60S ribosomal subunit export complex with NMD3, RAN, XPO1. Interacts with DDX3X, NMD3, NUP42, NUP88, NUP214, RANBP3 and TERT. Interacts with NEMF (via its N-terminus). Interacts with the monomeric form of BIRC5/survivin deacetylated at 'Lys-129'. Interacts with SERTAD2; the interaction translocates SERTAD2 out of the nucleus. Interacts with ATF2. Interacts with SLC35G1 and STIM1. Interacts with DCAF8. Interacts with DTNBP1 and the interaction translocates DTNBP1 out of the nucleus. Interacts with CPEB3. Interacts with HAX1. Interacts with BOK; translocates to the cytoplasm. Interacts with HSP90AB1. Interacts with LRPPRC; interacts with LRPPRC alone and also when LRPPRC is in complex with EIF4E and with EIF4E sensitivity element (4ESE)-containing mRNAs to form an EIF4E-dependent mRNA export complex.

It is found in the cytoplasm. The protein localises to the nucleus. The protein resides in the nucleoplasm. It localises to the cajal body. Its subcellular location is the nucleolus. Mediates the nuclear export of cellular proteins (cargos) bearing a leucine-rich nuclear export signal (NES) and of RNAs. In the nucleus, in association with RANBP3, binds cooperatively to the NES on its target protein and to the GTPase Ran in its active GTP-bound form. Docking of this complex to the nuclear pore complex (NPC) is mediated through binding to nucleoporins. Upon transit of a nuclear export complex into the cytoplasm, disassembling of the complex and hydrolysis of Ran-GTP to Ran-GDP (induced by RANBP1 and RANGAP1, respectively) cause release of the cargo from the export receptor. The directionality of nuclear export is thought to be conferred by an asymmetric distribution of the GTP- and GDP-bound forms of Ran between the cytoplasm and nucleus. Involved in U3 snoRNA transport from Cajal bodies to nucleoli. Binds to late precursor U3 snoRNA bearing a TMG cap. The protein is Exportin-1 (Xpo1) of Mus musculus (Mouse).